The primary structure comprises 283 residues: Pantothenate synthetase (283 aa).

26–33 (MGNLHEGH) is a binding site for ATP. The active-site Proton donor is the His33. Gln57 contributes to the (R)-pantoate binding site. Gln57 is a beta-alanine binding site. 144-147 (GKKD) provides a ligand contact to ATP. Gln150 is a (R)-pantoate binding site. Position 181-184 (181-184 (LSSR)) interacts with ATP.

Belongs to the pantothenate synthetase family. Homodimer.

The protein localises to the cytoplasm. The catalysed reaction is (R)-pantoate + beta-alanine + ATP = (R)-pantothenate + AMP + diphosphate + H(+). The protein operates within cofactor biosynthesis; (R)-pantothenate biosynthesis; (R)-pantothenate from (R)-pantoate and beta-alanine: step 1/1. Functionally, catalyzes the condensation of pantoate with beta-alanine in an ATP-dependent reaction via a pantoyl-adenylate intermediate. The sequence is that of Pantothenate synthetase from Variovorax paradoxus (strain S110).